We begin with the raw amino-acid sequence, 339 residues long: NADH-quinone oxidoreductase subunit H (339 aa).

9 helical membrane-spanning segments follow: residues 9–29, 50–70, 82–102, 115–135, 161–181, 187–207, 235–255, 275–295, and 311–331; these read IFPL…LILC, PNVV…KLLF, ILFI…WAVI, VGVL…IIAG, MGLV…SGII, MPWW…ISVL, MGFA…SAMT, IPGF…FLWI, and GWKV…SVLV.

The protein belongs to the complex I subunit 1 family. As to quaternary structure, NDH-1 is composed of 14 different subunits. Subunits NuoA, H, J, K, L, M, N constitute the membrane sector of the complex.

The protein resides in the cell inner membrane. It catalyses the reaction a quinone + NADH + 5 H(+)(in) = a quinol + NAD(+) + 4 H(+)(out). Functionally, NDH-1 shuttles electrons from NADH, via FMN and iron-sulfur (Fe-S) centers, to quinones in the respiratory chain. The immediate electron acceptor for the enzyme in this species is believed to be ubiquinone. Couples the redox reaction to proton translocation (for every two electrons transferred, four hydrogen ions are translocated across the cytoplasmic membrane), and thus conserves the redox energy in a proton gradient. This subunit may bind ubiquinone. This is NADH-quinone oxidoreductase subunit H from Rickettsia conorii (strain ATCC VR-613 / Malish 7).